A 441-amino-acid polypeptide reads, in one-letter code: Zinc finger and BTB domain-containing protein 8A (441 aa).

In terms of domain architecture, BTB spans 24–92 (CDCSILVEGK…VYSGKLSLTG (69 aa)). Composition is skewed to polar residues over residues 146-170 (ERSS…SPDQ) and 178-197 (KSWS…QQPL). The disordered stretch occupies residues 146 to 252 (ERSSFYSSGW…SEEQAQMNAE (107 aa)). 2 positions are modified to phosphoserine: Ser161 and Ser167. Glycyl lysine isopeptide (Lys-Gly) (interchain with G-Cter in SUMO2) cross-links involve residues Lys178, Lys182, and Lys199. Residues 198 to 208 (TKHEQRKDSIK) are compositionally biased toward basic and acidic residues. Low complexity predominate over residues 234-248 (SDSSSHASQSEEQAQ). 2 C2H2-type zinc fingers span residues 282 to 304 (FKCP…LRCH) and 310 to 333 (YPCQ…RTIH). Residue Lys437 forms a Glycyl lysine isopeptide (Lys-Gly) (interchain with G-Cter in SUMO2) linkage.

It is found in the nucleus. Its function is as follows. May be involved in transcriptional regulation. This chain is Zinc finger and BTB domain-containing protein 8A (ZBTB8A), found in Bos taurus (Bovine).